Here is a 147-residue protein sequence, read N- to C-terminus: MVNLTSDEKTAVLALWNKVDVEDCGGEALGRLLVVYPWTQRFFESFGDLSTPAAVFANAKVKAHGKKVLTSFGEGMNHLDNLKGTFAKLSELHCDKLHVDPENFKLLGNMLVVVLARHFGKEFDWHMHACFQKVVAGVANALAHKYH.

Position 2 is an N-acetylvaline (valine 2). The Globin domain occupies 3–147 (NLTSDEKTAV…VANALAHKYH (145 aa)). Serine 45 is modified (phosphoserine). An N6-acetyllysine modification is found at lysine 60. Histidine 64 contributes to the heme b binding site. Lysine 83 carries the post-translational modification N6-acetyllysine. Histidine 93 is a heme b binding site. Cysteine 94 bears the S-nitrosocysteine mark. Residue lysine 145 is modified to N6-acetyllysine.

Belongs to the globin family. In terms of assembly, heterotetramer of two alpha chains and two beta chains. Red blood cells.

In terms of biological role, involved in oxygen transport from the lung to the various peripheral tissues. The protein is Hemoglobin subunit beta (HBB) of Dasypus novemcinctus (Nine-banded armadillo).